Consider the following 412-residue polypeptide: FAD-dependent monooxygenase nscC (412 aa).

Residues 1 to 21 (MGKQQETILIIGAGIAGLTTS) form the signal peptide. Glutamate 35 and alanine 46 together coordinate FAD. Asparagine 92 carries N-linked (GlcNAc...) asparagine glycosylation. Arginine 119 lines the FAD pocket. Residues asparagine 170 and asparagine 231 are each glycosylated (N-linked (GlcNAc...) asparagine). Positions 326 and 339 each coordinate FAD.

This sequence belongs to the paxM FAD-dependent monooxygenase family. FAD is required as a cofactor.

The protein operates within secondary metabolite biosynthesis. In terms of biological role, FAD-dependent monooxygenase; part of the gene cluster that mediates the biosynthesis of neosartoricin B, a prenylated anthracenone that probably exhibits T-cell antiproliferative activity, suggestive of a physiological role as an immunosuppressive agent. The non-reducing polyketide synthase nscA probably synthesizes and cyclizes the decaketide backbone. The hydrolase nscB then mediates the product release through hydrolysis followed by spontaneous decarboxylation. The prenyltransferase nscD catalyzes the addition of the dimethylallyl group to the aromatic C5. The FAD-dependent monooxygenase nscC is then responsible for the stereospecific hydroxylation at C2. Neosartoricin B can be converted into two additional compounds neosartoricins C and D. Neosartoricin C is a spirocyclic compound that is cyclized through the attack of C3 hydroxyl on C14, followed by dehydration. On the other hand, neosartoricin D is a further cyclized compound in which attack of C2 on C14 in neosartoricin C results in the formation of the acetal-containing dioxabicyclo-octanone ring. Both of these compounds are novel and possibly represent related metabolites of the gene cluster. The polypeptide is FAD-dependent monooxygenase nscC (Arthroderma benhamiae (strain ATCC MYA-4681 / CBS 112371) (Trichophyton mentagrophytes)).